An 802-amino-acid polypeptide reads, in one-letter code: Elongation factor G, mitochondrial (802 aa).

The transit peptide at 1–24 directs the protein to the mitochondrion; sequence MRCPSLARLPNRALSGLTRSPVRL. One can recognise a tr-type G domain in the interval 100–387; the sequence is SRLRNIGIAA…GVIDYLPNPS (288 aa). GTP-binding positions include 109-116, 185-189, and 239-242; these read AHIDSGKT, DTPGH, and NKMD.

This sequence belongs to the TRAFAC class translation factor GTPase superfamily. Classic translation factor GTPase family. EF-G/EF-2 subfamily.

Its subcellular location is the mitochondrion. It participates in protein biosynthesis; polypeptide chain elongation. Mitochondrial GTPase that catalyzes the GTP-dependent ribosomal translocation step during translation elongation. During this step, the ribosome changes from the pre-translocational (PRE) to the post-translocational (POST) state as the newly formed A-site-bound peptidyl-tRNA and P-site-bound deacylated tRNA move to the P and E sites, respectively. Catalyzes the coordinated movement of the two tRNA molecules, the mRNA and conformational changes in the ribosome. This Aspergillus fumigatus (strain CBS 144.89 / FGSC A1163 / CEA10) (Neosartorya fumigata) protein is Elongation factor G, mitochondrial (mef1).